Reading from the N-terminus, the 465-residue chain is MACTTILVGKKASYDGSTMVARTEDSQNGDFTPKKMIVVKPEDQPRHYRSVQSSFEMDLPDNPMTYTSVPDALGKDGIWAEAGVNEANVAMSATETITTNSRVLGADPLVASGIGEEDMVTLVLPYIRSAREGVLRLGAILEDYGTYESNGVAFSDEHDIWWLETIGGHHWIARRVPDDAYVTNPNQFGIDHFEFNNPEDYLCSADLKDFIDTYHLDLTYSHEHFNPRYAFGSQRDKDRQYNTPRVWIMQKFLNPEIVQDPRSFALAWCQKPYRKITVEDVKYVLSSHYQDTVYDPYGSEGTPVSKKVFRPIGINRTSQTAILHIRPNKPQEIAAIQWMAYGSMPFNTMVPFFTQVKTIPDYFANTYENVSTDNFYWTNRLIAALADPHYNHHETDLDNYLEETMAKGHAMLHAVEAQLLAGETVDLEEENQKMSDYVQGETQTLLNKILFDASNLMTNRFSLSD.

C3 is an active-site residue.

This sequence belongs to the peptidase C69 family.

The catalysed reaction is an L-aminoacyl-L-amino acid + H2O = 2 an L-alpha-amino acid. This chain is Probable dipeptidase A (pepDA), found in Streptococcus pyogenes serotype M3 (strain SSI-1).